Consider the following 312-residue polypeptide: Glyoxylate/hydroxypyruvate reductase A (312 aa).

The active site involves Arg227. The active-site Proton donor is His275.

It belongs to the D-isomer specific 2-hydroxyacid dehydrogenase family. GhrA subfamily.

Its subcellular location is the cytoplasm. The enzyme catalyses glycolate + NADP(+) = glyoxylate + NADPH + H(+). It carries out the reaction (R)-glycerate + NAD(+) = 3-hydroxypyruvate + NADH + H(+). The catalysed reaction is (R)-glycerate + NADP(+) = 3-hydroxypyruvate + NADPH + H(+). Catalyzes the NADPH-dependent reduction of glyoxylate and hydroxypyruvate into glycolate and glycerate, respectively. This is Glyoxylate/hydroxypyruvate reductase A from Salmonella heidelberg (strain SL476).